The following is a 207-amino-acid chain: Guanylate kinase (207 aa).

The Guanylate kinase-like domain maps to 4–184; it reads GTLYIVSAPS…ALADLHTIIR (181 aa). 11-18 is a binding site for ATP; sequence APSGAGKS.

It belongs to the guanylate kinase family.

The protein resides in the cytoplasm. The enzyme catalyses GMP + ATP = GDP + ADP. Essential for recycling GMP and indirectly, cGMP. The sequence is that of Guanylate kinase from Photorhabdus laumondii subsp. laumondii (strain DSM 15139 / CIP 105565 / TT01) (Photorhabdus luminescens subsp. laumondii).